The sequence spans 67 residues: Large ribosomal subunit protein uL29 (67 aa).

It belongs to the universal ribosomal protein uL29 family.

In Polaromonas naphthalenivorans (strain CJ2), this protein is Large ribosomal subunit protein uL29.